A 198-amino-acid polypeptide reads, in one-letter code: MKKKFRTKLKKLQYFKLTFLPGFCTKLLKKELVPIKKGKTSSFRIQLLEKQKLKYNYRLKENQIKKYFKYIKLLKIFNLIQIIELRLDATIFRLGFAKSINQARQLITHGFIFINSILVKKPSFILTEKDLIYINPKKFTIILICRINLFFRYYNKYNLYIYTLCVEYLKFKLQKEFYFKLYLFIPFDENLIKYYYKF.

One can recognise an S4 RNA-binding domain in the interval Leu-85–Cys-145.

It belongs to the universal ribosomal protein uS4 family. Part of the 30S ribosomal subunit.

The protein resides in the plastid. Its subcellular location is the apicoplast. One of the primary rRNA binding proteins, it binds directly to 16S rRNA where it nucleates assembly of the body of the 30S subunit. In Toxoplasma gondii, this protein is Small ribosomal subunit protein uS4c (rps4).